We begin with the raw amino-acid sequence, 386 residues long: DNA replication and repair protein RecF (386 aa).

30-37 (GANAQGKT) serves as a coordination point for ATP.

This sequence belongs to the RecF family.

Its subcellular location is the cytoplasm. In terms of biological role, the RecF protein is involved in DNA metabolism; it is required for DNA replication and normal SOS inducibility. RecF binds preferentially to single-stranded, linear DNA. It also seems to bind ATP. The polypeptide is DNA replication and repair protein RecF (Natranaerobius thermophilus (strain ATCC BAA-1301 / DSM 18059 / JW/NM-WN-LF)).